The primary structure comprises 117 residues: Large ribosomal subunit protein bL20 (117 aa).

The protein belongs to the bacterial ribosomal protein bL20 family.

Functionally, binds directly to 23S ribosomal RNA and is necessary for the in vitro assembly process of the 50S ribosomal subunit. It is not involved in the protein synthesizing functions of that subunit. The chain is Large ribosomal subunit protein bL20 from Streptococcus suis (strain 05ZYH33).